The primary structure comprises 360 residues: S-adenosylmethionine:tRNA ribosyltransferase-isomerase (360 aa).

It belongs to the QueA family. In terms of assembly, monomer.

The protein localises to the cytoplasm. It catalyses the reaction 7-aminomethyl-7-carbaguanosine(34) in tRNA + S-adenosyl-L-methionine = epoxyqueuosine(34) in tRNA + adenine + L-methionine + 2 H(+). The protein operates within tRNA modification; tRNA-queuosine biosynthesis. Transfers and isomerizes the ribose moiety from AdoMet to the 7-aminomethyl group of 7-deazaguanine (preQ1-tRNA) to give epoxyqueuosine (oQ-tRNA). The sequence is that of S-adenosylmethionine:tRNA ribosyltransferase-isomerase from Burkholderia pseudomallei (strain K96243).